We begin with the raw amino-acid sequence, 145 residues long: Venom protein 30.1 (145 aa).

Residues 1-18 form the signal peptide; it reads MIIVKLFTCLLMVSSVLT.

Contains 5 disulfide bonds. As to expression, expressed by the venom gland.

It is found in the secreted. In Lychas mucronatus (Chinese swimming scorpion), this protein is Venom protein 30.1.